The chain runs to 1002 residues: MVRLYNLHPFGSQQVVPCQWEPEQVCCGGSDALFVAAGCKVEAFAVQGEELCRQRCAFSTLGRVLRMAYSEAGDYLVAIEEKNKTIFLRAYVNWRSKRSDNSRVCIRMVGHNVEASFCESFRDQMSIIEMPMSEAPLCFSCCPVKGDLLVGCTNKLVLFTLKYDIINEEFSILNFERSLIIHIDNITPVEISFCVGYVAVMSDLEVLLLKLESDPIHGESVDHHPQETSNPLKEAEGVSNETSQLESEDFVICLKPMELIGEKCEQSGISVKLESTGLEDEKVKYLRVRHLLYRRFAPDISSYVLSDNIKLHSLQLLPIHQSGFHPDENDLSPKKEMPNLFCFFSLPHVGYLYMVVKSVELMSVYWYPEKSQQAVLTPQFLHVITSQSLQCFTVRCSAAVAHEEDLYMDTTLKACPPVSMDVCALRIQLFIGLKAICHFKNHIILLTKAEPEAIPERRESPKKLISRKDASVRSGTPHVAEAAWNLYLVNTTAPVQLYKEMVDYSNSYKTVKTESCLHLLSEAHLLVRAALMDGSQLEPAEKAELLEAFKESCGHLGDCYSRLTTEQSHLALPYYKMSGLSLAEVLARVDWTEESESQKYERGLVFYINHSLYENLDEELSKELAAKVAQIFHMAEPKQLPHVLSSPSMKNIDPLTALHYLRKLDSCGVSPVLVTLTKAAVALKMGDLDMYRNEMKSHSEMKLVYGFILEPRLLIQQWKGQIVPTELAIDLKETQPGLLVASVLGLQKNDKIGIVETDSFFKVLCGKDEDAVPQLLIDFWEAQLVACLPNVVLEELFFKLISQYVWRLSERRCPDTVPLRTAEDLINACSHYGLVNPWVHVLTTSDSLADKNYTDDLLKLQSLICSPSLDVASIIPFLEPLSEDTVAGLSTHALCHTRLQEYEQCIDTLLERCPEAVIAYANQELKEDHWILWWKKLLPELCQRVKSGGERSHLHLSLLKETLSVIAVGLDLRDFLNVLPEDGAAAFFLPYLLFCSRKKSLT.

The interval 218-239 (GESVDHHPQETSNPLKEAEGVS) is disordered.

Component of the biogenesis of lysosome-related organelles complex-2 (or BLOC2) composed of HPS3, HPS5 and HPS6. Interacts with HPS5 and HPS6. Found in heart, brain, spleen, liver, lung, kidney and testis.

Its subcellular location is the cytoplasm. It is found in the cytosol. In terms of biological role, involved in early stages of melanosome biogenesis and maturation. The protein is BLOC-2 complex member HPS3 (Hps3) of Mus musculus (Mouse).